A 536-amino-acid chain; its full sequence is Chaperonin GroEL 1 (536 aa).

ATP-binding positions include 29–32 (TLGP), 86–90 (DGTTT), glycine 413, 476–478 (NAA), and aspartate 492.

It belongs to the chaperonin (HSP60) family. In terms of assembly, forms a cylinder of 14 subunits composed of two heptameric rings stacked back-to-back. Interacts with the co-chaperonin GroES.

It localises to the cytoplasm. The enzyme catalyses ATP + H2O + a folded polypeptide = ADP + phosphate + an unfolded polypeptide.. Its function is as follows. Together with its co-chaperonin GroES, plays an essential role in assisting protein folding. The GroEL-GroES system forms a nano-cage that allows encapsulation of the non-native substrate proteins and provides a physical environment optimized to promote and accelerate protein folding. This Nocardia farcinica (strain IFM 10152) protein is Chaperonin GroEL 1.